We begin with the raw amino-acid sequence, 247 residues long: Uridylate kinase (247 aa).

17-20 (KFSG) is a binding site for ATP. G59 contacts UMP. Residues G60 and R64 each contribute to the ATP site. Residues D79 and 140–147 (TGNPFFTT) contribute to the UMP site. ATP contacts are provided by T167, Y173, and D176.

This sequence belongs to the UMP kinase family. Homohexamer.

The protein resides in the cytoplasm. It carries out the reaction UMP + ATP = UDP + ADP. It functions in the pathway pyrimidine metabolism; CTP biosynthesis via de novo pathway; UDP from UMP (UMPK route): step 1/1. With respect to regulation, inhibited by UTP. In terms of biological role, catalyzes the reversible phosphorylation of UMP to UDP. This is Uridylate kinase from Legionella pneumophila (strain Paris).